Reading from the N-terminus, the 95-residue chain is Fungal defensin plectasin (95 aa).

An N-terminal signal peptide occupies residues M1–A23. Positions A24–R55 are excised as a propeptide. The beta-D-GlcNAc-(1-&gt;4)-Mur2Ac(oyl-L-Ala-gamma-D-Glu-L-Lys-D-Ala-D-Ala)-di-trans,octa-cis-undecaprenyl diphosphate site is built by F57, G58, and C59. Disulfide bonds link C59/C85, C70/C92, and C74/C94. The tract at residues G61–D64 is binds to membrane interface. Positions 67, 73, 84, 86, 88, 92, and 93 each coordinate beta-D-GlcNAc-(1-&gt;4)-Mur2Ac(oyl-L-Ala-gamma-D-Glu-L-Lys-D-Ala-D-Ala)-di-trans,octa-cis-undecaprenyl diphosphate. Residues A86–C92 are binds to membrane interface.

It belongs to the invertebrate defensin family. Type 2 subfamily.

The protein localises to the secreted. Its subcellular location is the host cell membrane. Antimicrobial peptide that potently acts against several species of Gram-positive bacteria. It selectively inhibits peptidoglycan biosynthesis through complex formation with the cell wall precursor lipid II (1:1 molar ratio) thus inhibiting cell wall synthesis. It does not disrupt cell membranes. Is especially active against numerous clinical isolates of S.pneumoniae, including all 90 different serotypes and isolates resistant to clinically used antibiotics. In vitro, shows considerable selectivity for bacteria over mammalian cells. The peptide synthesized in D-amino acids does not show antibacterial activity. In vitro, acts on voltage-gated potassium channels by moderately inhibiting mammalian Kv1.3/KCNA3 (IC(50)=2.8 uM), and moderately inhibiting others potassium channels. This chain is Fungal defensin plectasin (DEF), found in Pseudoplectania nigrella (Ebony cup).